A 200-amino-acid chain; its full sequence is Phospholipase A2 inhibitor 1 (200 aa).

Positions 1–19 (MKSLHIICLLFIFVARGNS) are cleaved as a signal peptide. 8 disulfide bridges follow: Cys22/Cys46, Cys25/Cys32, Cys39/Cys67, Cys73/Cys94, Cys95/Cys100, Cys118/Cys143, Cys136/Cys165, and Cys169/Cys191. N-linked (GlcNAc...) asparagine glycosylation is present at Asn176.

It belongs to the CNF-like-inhibitor family. Occurs as a mixture of oligomers. Tetrameric arrangement appears to be the predominant quaternary structure. In terms of processing, N-glycosylated. In terms of tissue distribution, expressed by the liver.

The protein resides in the secreted. Functionally, inhibits basic phospholipase A2 isozymes PLA-B, BP-I and BP-II. The polypeptide is Phospholipase A2 inhibitor 1 (Protobothrops flavoviridis (Habu)).